The following is an 84-amino-acid chain: UPF0153 protein YeiW (84 aa).

This sequence belongs to the UPF0153 family.

This Escherichia coli (strain K12) protein is UPF0153 protein YeiW (yeiW).